A 222-amino-acid polypeptide reads, in one-letter code: Adapter protein MecA (222 aa).

It belongs to the MecA family. Homodimer.

In terms of biological role, enables the recognition and targeting of unfolded and aggregated proteins to the ClpC protease or to other proteins involved in proteolysis. The polypeptide is Adapter protein MecA (Lysinibacillus sphaericus (strain C3-41)).